Here is a 317-residue protein sequence, read N- to C-terminus: Beta-ketoacyl-[acyl-carrier-protein] synthase III (317 aa).

Catalysis depends on residues Cys112 and His244. Positions 245–249 (QANLR) are ACP-binding. Residue Asn274 is part of the active site.

Belongs to the thiolase-like superfamily. FabH family. Homodimer.

The protein resides in the cytoplasm. It carries out the reaction malonyl-[ACP] + acetyl-CoA + H(+) = 3-oxobutanoyl-[ACP] + CO2 + CoA. The protein operates within lipid metabolism; fatty acid biosynthesis. Its function is as follows. Catalyzes the condensation reaction of fatty acid synthesis by the addition to an acyl acceptor of two carbons from malonyl-ACP. Catalyzes the first condensation reaction which initiates fatty acid synthesis and may therefore play a role in governing the total rate of fatty acid production. Possesses both acetoacetyl-ACP synthase and acetyl transacylase activities. Its substrate specificity determines the biosynthesis of branched-chain and/or straight-chain of fatty acids. The sequence is that of Beta-ketoacyl-[acyl-carrier-protein] synthase III from Salmonella paratyphi A (strain ATCC 9150 / SARB42).